Here is a 123-residue protein sequence, read N- to C-terminus: Small ribosomal subunit protein uS13c (123 aa).

The disordered stretch occupies residues 90–123; sequence GKRHRNSLPVRGQRTRTNARSRRGAKKTVTGKKK. The segment covering 102–123 has biased composition (basic residues); sequence QRTRTNARSRRGAKKTVTGKKK.

This sequence belongs to the universal ribosomal protein uS13 family. As to quaternary structure, part of the 30S ribosomal subunit.

Its subcellular location is the plastid. It is found in the chloroplast. Its function is as follows. Located at the top of the head of the 30S subunit, it contacts several helices of the 16S rRNA. The chain is Small ribosomal subunit protein uS13c from Thalassiosira pseudonana (Marine diatom).